The primary structure comprises 205 residues: Holliday junction branch migration complex subunit RuvA (205 aa).

The tract at residues 1–64 (MIGKLKGVVD…EDMIRLYGFR (64 aa)) is domain I. Positions 65-143 (SDAEREWFRL…AFAPVDPALI (79 aa)) are domain II. The tract at residues 144–152 (RLAGAVEER) is flexible linker. The tract at residues 153–205 (TAPQPVADAISALVNLGYPQIQASAAVAAALQGAGEGAEAKTLIRLGLRELAR) is domain III.

The protein belongs to the RuvA family. Homotetramer. Forms an RuvA(8)-RuvB(12)-Holliday junction (HJ) complex. HJ DNA is sandwiched between 2 RuvA tetramers; dsDNA enters through RuvA and exits via RuvB. An RuvB hexamer assembles on each DNA strand where it exits the tetramer. Each RuvB hexamer is contacted by two RuvA subunits (via domain III) on 2 adjacent RuvB subunits; this complex drives branch migration. In the full resolvosome a probable DNA-RuvA(4)-RuvB(12)-RuvC(2) complex forms which resolves the HJ.

It is found in the cytoplasm. In terms of biological role, the RuvA-RuvB-RuvC complex processes Holliday junction (HJ) DNA during genetic recombination and DNA repair, while the RuvA-RuvB complex plays an important role in the rescue of blocked DNA replication forks via replication fork reversal (RFR). RuvA specifically binds to HJ cruciform DNA, conferring on it an open structure. The RuvB hexamer acts as an ATP-dependent pump, pulling dsDNA into and through the RuvAB complex. HJ branch migration allows RuvC to scan DNA until it finds its consensus sequence, where it cleaves and resolves the cruciform DNA. The protein is Holliday junction branch migration complex subunit RuvA of Methylobacterium nodulans (strain LMG 21967 / CNCM I-2342 / ORS 2060).